The primary structure comprises 141 residues: ATP synthase epsilon chain (141 aa).

This sequence belongs to the ATPase epsilon chain family. In terms of assembly, F-type ATPases have 2 components, CF(1) - the catalytic core - and CF(0) - the membrane proton channel. CF(1) has five subunits: alpha(3), beta(3), gamma(1), delta(1), epsilon(1). CF(0) has three main subunits: a, b and c.

It localises to the cell membrane. Functionally, produces ATP from ADP in the presence of a proton gradient across the membrane. This Natranaerobius thermophilus (strain ATCC BAA-1301 / DSM 18059 / JW/NM-WN-LF) protein is ATP synthase epsilon chain.